Reading from the N-terminus, the 240-residue chain is UDP-2,3-diacylglucosamine hydrolase (240 aa).

Mn(2+)-binding residues include Asp-8, His-10, Asp-41, Asn-79, and His-114. Residue 79 to 80 (NR) coordinates substrate. Residues Asp-122, Ser-160, Asn-164, Lys-167, and His-195 each coordinate substrate. Positions 195 and 197 each coordinate Mn(2+).

It belongs to the LpxH family. Requires Mn(2+) as cofactor.

Its subcellular location is the cell inner membrane. It carries out the reaction UDP-2-N,3-O-bis[(3R)-3-hydroxytetradecanoyl]-alpha-D-glucosamine + H2O = 2-N,3-O-bis[(3R)-3-hydroxytetradecanoyl]-alpha-D-glucosaminyl 1-phosphate + UMP + 2 H(+). The protein operates within glycolipid biosynthesis; lipid IV(A) biosynthesis; lipid IV(A) from (3R)-3-hydroxytetradecanoyl-[acyl-carrier-protein] and UDP-N-acetyl-alpha-D-glucosamine: step 4/6. Hydrolyzes the pyrophosphate bond of UDP-2,3-diacylglucosamine to yield 2,3-diacylglucosamine 1-phosphate (lipid X) and UMP by catalyzing the attack of water at the alpha-P atom. Involved in the biosynthesis of lipid A, a phosphorylated glycolipid that anchors the lipopolysaccharide to the outer membrane of the cell. The chain is UDP-2,3-diacylglucosamine hydrolase from Salmonella arizonae (strain ATCC BAA-731 / CDC346-86 / RSK2980).